The following is a 204-amino-acid chain: uncharacterized protein (204 aa).

Catalysis depends on Cys-52, which acts as the Acyl-thioester intermediate. Active-site residues include His-89 and Asp-104.

Belongs to the arylamine N-acetyltransferase family.

This is an uncharacterized protein from Acanthamoeba polyphaga mimivirus (APMV).